A 233-amino-acid polypeptide reads, in one-letter code: Endo-1,4-beta-xylanase 1 (233 aa).

A signal peptide spans 1 to 20; sequence MVSFTSIVTAVVALAGSALA. The N-linked (GlcNAc...) asparagine glycan is linked to N27. Residues 40-230 enclose the GH11 domain; it reads QSTPSSTGRH…SAGNSNINVQ (191 aa). The Nucleophile role is filled by E126. The active-site Proton donor is the E217.

The protein belongs to the glycosyl hydrolase 11 (cellulase G) family.

The protein resides in the secreted. The enzyme catalyses Endohydrolysis of (1-&gt;4)-beta-D-xylosidic linkages in xylans.. It functions in the pathway glycan degradation; xylan degradation. Functionally, endo-1,4-beta-xylanase involved in the hydrolysis of xylan, a major structural heterogeneous polysaccharide found in plant biomass representing the second most abundant polysaccharide in the biosphere, after cellulose. Accounts for approximately 70 percent of the endoxylanase activity in the culture filtrate. This chain is Endo-1,4-beta-xylanase 1 (XYL1), found in Pyricularia grisea (Crabgrass-specific blast fungus).